Consider the following 501-residue polypeptide: Glycoprotein 3-alpha-L-fucosyltransferase A (501 aa).

The Cytoplasmic portion of the chain corresponds to 1-39 (MGVFSNLRGPKIGLTHEELPVVANGSTSSSSSPSSFKRK). The helical; Signal-anchor for type II membrane protein transmembrane segment at 40–60 (VSTFLPICVALVVIIEIGFLC) threads the bilayer. Residues 61–501 (RLDNASLVDT…PCPKFEVVFV (441 aa)) are Lumenal-facing. 4 N-linked (GlcNAc...) asparagine glycosylation sites follow: N64, N337, N420, and N481.

The protein belongs to the glycosyltransferase 10 family. Mg(2+) is required as a cofactor. Mn(2+) serves as cofactor. In terms of processing, glycosylation may be important for enzymatic activity.

It localises to the golgi apparatus. The protein localises to the golgi stack membrane. The enzyme catalyses N(4)-{beta-D-GlcNAc-(1-&gt;2)-alpha-D-Man-(1-&gt;3)-[beta-D-GlcNAc-(1-&gt;2)-alpha-D-Man-(1-&gt;6)]-beta-D-Man-(1-&gt;4)-beta-D-GlcNAc-(1-&gt;4)-beta-D-GlcNAc}-L-asparaginyl-[protein] + GDP-beta-L-fucose = N(4)-{beta-D-GlcNAc-(1-&gt;2)-alpha-D-Man-(1-&gt;3)-[beta-D-GlcNAc-(1-&gt;2)-alpha-D-Man-(1-&gt;6)]-beta-D-Man-(1-&gt;4)-beta-D-GlcNAc-(1-&gt;4)-[alpha-L-Fuc(1-&gt;3)]-beta-D-GlcNAc}-L-asparaginyl-[protein] + GDP + H(+). It functions in the pathway protein modification; protein glycosylation. With respect to regulation, inhibited by Cu(2+) and Zn(2+). Functionally, involved in cell wall synthesis. Preferentially catalyzes the addition of fucose in alpha 1-3 linkage to the first GlcNAc residue next to the peptide chains in N-glycans. The polypeptide is Glycoprotein 3-alpha-L-fucosyltransferase A (FUT11) (Arabidopsis thaliana (Mouse-ear cress)).